We begin with the raw amino-acid sequence, 165 residues long: MTALTLPEDIRQQEPSALLYTLVSAYLEHTAQTGDESLSCLSDDQHTLTAFCYLDSQVEEGGFVQLIASGYGEYIFRNPLADSLRRWKIKAVPKVLDKAKALYEQHGKTIETLADGGADIPSLRKQFPEFEEWDGAYYEAAEQDLPLLAEHIQSNWETFAHIGQA.

Belongs to the DMP19-like protein family. In terms of assembly, monomer. Homodimer. The monomeric form of DMP19 interacts with the DNA-binding protein HU homodimer with 1:1 stoichiometry. The dimeric form of DMP19 interacts with the Neisseria hypothetical transcription factor (NHTF) dimer.

With respect to regulation, activity can be modulated in vitro by crown ethers, which are small cyclic polyethers that can modify protein surface behavior dramatically by stabilizing either intra- or intermolecular interactions, thereby probably altering the protein's tertiary and quaternary structure. Acts as a DNA mimic. Interacts with DNA-binding proteins and prevents their binding to DNA by occupying the DNA binding sites on the proteins, acting as a competitive inhibitor. DMP19 is a bifunctional DNA mimic protein involved in controlling nucleoid formation as well as gene regulation. This bifunctionality depends on different oligomeric states. The monomeric form interacts with the DNA-binding protein HU, which prevents HU from binding to DNA and forming nucleoids. The dimeric form interacts with the Neisseria hypothetical transcription factor (NHTF) and prevents NHTF from binding to its DNA-binding sites, thereby blocking its repressor activity and influencing expression of the target genes. DMP19 might use these different oligomerizations to regulate genes in two steps: the monomeric form may first release selected gene regions in chromosomal DNA by preventing HU from binding to DNA and forming nucleoids, then the dimeric form blocks the gene repressor activity of NHTF and ensures the continued expression of NHTF-controlled genes. This chain is DNA mimic protein DMP19, found in Neisseria meningitidis serogroup B (strain ATCC BAA-335 / MC58).